Reading from the N-terminus, the 316-residue chain is MKIVKISPRGYCYGVVDAMVIARNAALDKSLPRPIYILGMIVHNKHVTDAFEEDGIITLDGPSRLEILDKIDSGTVIFTAHGVSPEVKQRAKEKGLTTIDATCPDVTKTHDLIEAKKAEGYHVIYIGKKNHPEPEGAVGIAPDIVHLIERADDLKTLEIPTDKILVTNQTTMSQWDVQHLMEDIQKKFPTAEFHKEICLATQVRQEAVAKQADVADLTIVVGDPKSNNSNRLAQVSQEIAGTKAYRVADVSEIQLEWLQGVENVAVTAGASTPTPITKEVIAFLEQYNPMNPATWERVRKVPLQKILPRVKVKKEQ.

C12 is a [4Fe-4S] cluster binding site. (2E)-4-hydroxy-3-methylbut-2-enyl diphosphate-binding residues include H43 and H81. The dimethylallyl diphosphate site is built by H43 and H81. Positions 43 and 81 each coordinate isopentenyl diphosphate. C103 lines the [4Fe-4S] cluster pocket. Residue H131 participates in (2E)-4-hydroxy-3-methylbut-2-enyl diphosphate binding. H131 is a dimethylallyl diphosphate binding site. Residue H131 coordinates isopentenyl diphosphate. E133 (proton donor) is an active-site residue. T170 contacts (2E)-4-hydroxy-3-methylbut-2-enyl diphosphate. Position 198 (C198) interacts with [4Fe-4S] cluster. Positions 226, 228, and 271 each coordinate (2E)-4-hydroxy-3-methylbut-2-enyl diphosphate. Positions 226, 228, and 271 each coordinate dimethylallyl diphosphate. Isopentenyl diphosphate-binding residues include S226, N228, and S271.

It belongs to the IspH family. The cofactor is [4Fe-4S] cluster.

The catalysed reaction is isopentenyl diphosphate + 2 oxidized [2Fe-2S]-[ferredoxin] + H2O = (2E)-4-hydroxy-3-methylbut-2-enyl diphosphate + 2 reduced [2Fe-2S]-[ferredoxin] + 2 H(+). It carries out the reaction dimethylallyl diphosphate + 2 oxidized [2Fe-2S]-[ferredoxin] + H2O = (2E)-4-hydroxy-3-methylbut-2-enyl diphosphate + 2 reduced [2Fe-2S]-[ferredoxin] + 2 H(+). The protein operates within isoprenoid biosynthesis; dimethylallyl diphosphate biosynthesis; dimethylallyl diphosphate from (2E)-4-hydroxy-3-methylbutenyl diphosphate: step 1/1. It participates in isoprenoid biosynthesis; isopentenyl diphosphate biosynthesis via DXP pathway; isopentenyl diphosphate from 1-deoxy-D-xylulose 5-phosphate: step 6/6. Catalyzes the conversion of 1-hydroxy-2-methyl-2-(E)-butenyl 4-diphosphate (HMBPP) into a mixture of isopentenyl diphosphate (IPP) and dimethylallyl diphosphate (DMAPP). Acts in the terminal step of the DOXP/MEP pathway for isoprenoid precursor biosynthesis. In Bacillus cereus (strain B4264), this protein is 4-hydroxy-3-methylbut-2-enyl diphosphate reductase.